The chain runs to 1697 residues: Neurexin-3a (1697 aa).

The first 23 residues, 1 to 23 (MNFFRFPVQLQLLISTVLGPCLG), serve as a signal peptide directing secretion. In terms of domain architecture, Laminin G-like 1 spans 24-198 (LEFTGLQGQW…RVRMDIEGIC (175 aa)). The Extracellular portion of the chain corresponds to 24–1622 (LEFTGLQGQW…EVVRESSSTT (1599 aa)). Residues 194–231 (IEGICMENPCENGGTCSVVDGEPLCDCSKTEYVGRFCN) form the EGF-like 1 domain. Cystine bridges form between cysteine 198-cysteine 209, cysteine 203-cysteine 218, and cysteine 220-cysteine 230. Laminin G-like domains follow at residues 258–455 (VATF…VFKC) and 462–654 (DPIS…KPSC). 3 residues coordinate Ca(2+): aspartate 304, leucine 321, and methionine 389. 5 disulfides stabilise this stretch: cysteine 419–cysteine 455, cysteine 625–cysteine 654, cysteine 662–cysteine 673, cysteine 667–cysteine 682, and cysteine 684–cysteine 694. One can recognise an EGF-like 2 domain in the interval 658-695 (SGKQCDSYPCKNKGLCKEGWNRFICDCTGTGYWSRTCE). 2 consecutive Laminin G-like domains span residues 700 to 872 (ILSY…IDFC) and 886 to 1061 (DPVT…ERGC). Intrachain disulfides connect cysteine 1033-cysteine 1061, cysteine 1077-cysteine 1088, cysteine 1082-cysteine 1097, and cysteine 1099-cysteine 1109. An EGF-like 3 domain is found at 1073-1110 (PSTTCQEDSCANMGICIQQWENYTCDCSMTSYTGTHCN). The 201-residue stretch at 1114–1314 (TTYIFGKGGG…NPNIKINGSV (201 aa)) folds into the Laminin G-like 6 domain. Disordered stretches follow at residues 1345–1366 (TMSTTTTRKHRTPPTIQTTDDM), 1442–1479 (LSDGGSDDCGDDDDDDDDDGLMISGYGSGEAYDSNLPP), and 1520–1557 (PNKVFDSGRTTTASFSPKLSRSTTTSTPPKLPAGKMNH). The span at 1446–1461 (GSDDCGDDDDDDDDDG) shows a compositional bias: acidic residues. Residues 1527–1547 (GRTTTASFSPKLSRSTTTSTP) show a composition bias toward polar residues. Residues 1623-1643 (GMVVGIVAAAALCILILLYAM) traverse the membrane as a helical segment. At 1644-1697 (YKYRNRDEGSYQVDETRNYITNSAQSNGAVMKDKQQSTKSGNKKQKNKDKEYYV) the chain is on the cytoplasmic side. Residues 1665–1697 (NSAQSNGAVMKDKQQSTKSGNKKQKNKDKEYYV) form a disordered region.

This sequence belongs to the neurexin family.

The protein localises to the membrane. Functionally, neuronal cell surface protein that may be involved in cell recognition and cell adhesion. The polypeptide is Neurexin-3a (nrxn3a) (Danio rerio (Zebrafish)).